The chain runs to 394 residues: Potassium channel subfamily K member 18 (394 aa).

The Cytoplasmic segment spans residues 1–31 (MEAEEPPEARRCCPEALGKARGCCPEALGKL). The chain crosses the membrane as a helical span at residues 32 to 52 (LPGLCFLCCLVTYALVGAALF). N83 carries N-linked (GlcNAc...) asparagine glycosylation. The segment at residues 114-140 (FLSALFFCCTVFSTVGYGHMYPVTRLG) is an intramembrane region (pore-forming). K(+) contacts are provided by T127, V128, G129, and Y130. The interval 127–132 (TVGYGH) is selectivity filter 1. Residues 142–162 (FLCMLYALFGIPLMFLVLTDI) traverse the membrane as a helical segment. Over 163-292 (GDILATILSR…EVGQQVERLD (130 aa)) the chain is Cytoplasmic. Residues 210–215 (PQIVID) are interaction with calcineurin. Residues 261–266 (RSNSCP) form an interaction with YWHAH region. Phosphoserine is present on residues S264 and S276. The chain crosses the membrane as a helical span at residues 293–313 (IPLPVIALVVFAYISCAAAIL). The pore-forming intramembrane region spans 326 to 340 (FYFCFVTLTTIGFGD). The interval 335–340 (TIGFGD) is selectivity filter 2. A helical transmembrane segment spans residues 347 to 367 (HFFLFFSIYIIVGMEILFIAF). The Cytoplasmic segment spans residues 368-394 (KLMQNRLLHTYKTLMLFVCQREVSLPW).

It belongs to the two pore domain potassium channel (TC 1.A.1.8) family. As to quaternary structure, homodimer. Heterodimer with KCNK2. Heterodimer with KCNK10. Interacts with calcineurin. Interacts with YWHAH, in a phosphorylation-dependent manner. Phosphorylation of Ser-264 is required for the binding of 14-3-3eta/YWHAH. Calcineurin-mediated dephosphorylation of Ser-276 enhances channel activity. Post-translationally, N-glycosylated. Detected in brain cortex, cerebellum, dorsal root ganglion, spinal cord and testis. High expression in trigeminal ganglion (at protein level), also expressed in autonomic nervous system ganglia such as the stellate ganglion and paravertebral sympathetic ganglia. Expressed in all adult spinal cord and brain regions, with slightly higher expression in thalamus, hypothalamus, hippocampus and posterior corte (at protein level). In non-neuronal tissues, substantial expression found in lung and heart and weal expression in liver, testis, kidney, small intestine and spleen. Expressed in regulatory T cells (at protein level).

It is found in the cell membrane. The catalysed reaction is K(+)(in) = K(+)(out). Activated upon cell stimulation via Ca(2+)-mobilizing receptors, such as CHRM1/M1 muscarinic receptor and AGTR1/AT1a angiotensin receptor. Activated by volatile anesthetics, such as isoflurane and inhibited by local anesthetics such as bupivacaine and lidocaine. Inhibited by extracellular acidic pH. Inhibited by Zn(2+) ions. Inhibited by hydroxy-alpha-sanshool, an ingredient of Schezuan pepper. Inhibited by Ba(2+) ions. Functionally, k(+) channel that conducts outward and inward rectifying currents at depolarized and hyperpolarized membrane potentials, respectively. The outward rectifying currents are voltage-dependent, coupled to K(+) electrochemical gradient across the membrane, whereas the inward currents can be induced in response to activation of Ca(2+)-mobilizing receptors. Homo- and heterodimerizes to form functional channels with distinct regulatory and gating properties. In trigeminal ganglia sensory neurons, the heterodimers of KCNK18/TRESK and KCNK2/TREK-1 or KCNK10/TREK-2 inhibit neuronal firing and neurogenic inflammation by stabilizing the resting membrane potential at K(+) equilibrium potential as well as by regulating the threshold of action potentials and the spike frequency. In thymocytes, conducts K(+) currents upon T cell receptor (TCR) signaling leading to sustained Ca(2+) influx and NF-kappa-B activation, FOXP3 transcription and positive selection of regulatory T cell (Treg) progenitor subsets. Appears to mediate the analgesics effects of hydroxy-alpha-sanshool, a metabolite naturally present in Schezuan pepper and other Xanthoxylum plants. This Mus musculus (Mouse) protein is Potassium channel subfamily K member 18.